Reading from the N-terminus, the 221-residue chain is 2-amino-5-formylamino-6-ribosylaminopyrimidin-4(3H)-one 5'-monophosphate deformylase (221 aa).

Glu29, His31, Asp40, and His108 together coordinate Fe cation.

Belongs to the creatininase superfamily. FAPy deformylase family. As to quaternary structure, homodimer. The cofactor is Fe(2+). Requires Zn(2+) as cofactor.

It catalyses the reaction 2-amino-5-formylamino-6-(5-phospho-D-ribosylamino)pyrimidin-4(3H)-one + H2O = 2,5-diamino-6-(1-D-ribosylamino)pyrimidin-4(3H)-one 5'-phosphate + formate + H(+). It participates in cofactor biosynthesis; coenzyme F420 biosynthesis. The protein operates within cofactor biosynthesis; riboflavin biosynthesis. Catalyzes the hydrolysis of the formamide of 2-amino-5-formylamino-6-ribosylamino-4(3H)-pyrimidinone 5'-monophosphate (FAPy) to form 2,5-diamino-6-ribosylamino-4(3H)-pyrimidinone 5'-phosphate (APy). This chain is 2-amino-5-formylamino-6-ribosylaminopyrimidin-4(3H)-one 5'-monophosphate deformylase, found in Methanococcus maripaludis (strain DSM 14266 / JCM 13030 / NBRC 101832 / S2 / LL).